The sequence spans 285 residues: MEDRWQECMDFLAVSIARKAGSVVCAALKEDVSIMVKTSLAPADLVTATDQKVEEMIISSIKEKYPSHSFIGEESVAAGAGSTLTDNPTWIIDPIDGTTNFVHRFPFVAVSIGFAVHKQVEFGVVYSCVEDKMYTGRKGKGSFCNGQKLQVSGQKDITKSMIITELGSNRNPEFIKTVSLSNMERLLCIPIHGIRAVGTAAVNMCLVATGGADAYYEMGLHCWDMAAASVIVTEAGGTILDATGGLFDLMSCRIISASSREIAERIAKELQIIPLERDDGKSTNS.

Mg(2+) contacts are provided by Glu73, Asp93, Ile95, and Asp96. Glu73 provides a ligand contact to substrate. Substrate is bound by residues 95 to 98 (IDGT), 198 to 200 (GTA), Glu217, and Asp224. Asp224 lines the Mg(2+) pocket.

Belongs to the inositol monophosphatase superfamily. As to quaternary structure, homodimer. Mg(2+) serves as cofactor.

It localises to the cytoplasm. It catalyses the reaction a myo-inositol phosphate + H2O = myo-inositol + phosphate. The enzyme catalyses 1D-myo-inositol 1-phosphate + H2O = myo-inositol + phosphate. The catalysed reaction is 1D-myo-inositol 2-phosphate + H2O = myo-inositol + phosphate. It carries out the reaction 1D-myo-inositol 3-phosphate + H2O = myo-inositol + phosphate. It catalyses the reaction 1D-myo-inositol 4-phosphate + H2O = myo-inositol + phosphate. The enzyme catalyses 1D-myo-inositol 5-phosphate + H2O = myo-inositol + phosphate. The catalysed reaction is 1D-myo-inositol 6-phosphate + H2O = myo-inositol + phosphate. It carries out the reaction scyllo-inositol 1-phosphate + H2O = scyllo-inositol + phosphate. It catalyses the reaction alpha-D-galactose 1-phosphate + H2O = D-galactose + phosphate. The enzyme catalyses alpha-D-glucose 1-phosphate + H2O = D-glucose + phosphate. The catalysed reaction is D-glucose 6-phosphate + H2O = D-glucose + phosphate. It carries out the reaction beta-D-fructose 1-phosphate + H2O = D-fructose + phosphate. It catalyses the reaction glycerol 2-phosphate + H2O = glycerol + phosphate. The enzyme catalyses adenosine 2'-phosphate + H2O = adenosine + phosphate. It functions in the pathway polyol metabolism; myo-inositol biosynthesis; myo-inositol from D-glucose 6-phosphate: step 2/2. Inhibited by Li(+), Ca(2+) and Mn(2+), but also by Mg(2+) at concentrations above 3 mM. Functionally, phosphatase involved in the dephosphorylation of myo-inositol monophosphate to generate myo-inositol. Is also able to dephosphorylate scyllo-inositol-phosphate, myo-inositol 1,4-diphosphate, scyllo-inositol-1,3-diphosphate and scyllo-inositol-1,4-diphosphate. Also dephosphorylates in vitro other sugar-phosphates including D-galactose-1-phosphate, glucose-1-phosphate, glucose-6-phosphate, fructose-1-phosphate, beta-glycerophosphate and 2'-AMP. Responsible for the provision of inositol required for synthesis of phosphatidylinositol and polyphosphoinositides, and involved in maintaining normal brain function. Has been implicated as the pharmacological target for lithium Li(+) action in brain. In Xenopus laevis (African clawed frog), this protein is Inositol monophosphatase 1 (impa1).